A 1003-amino-acid polypeptide reads, in one-letter code: Cation-transporting ATPase HMA5 (1003 aa).

The segment at 6–25 (LSAVAGGGRPAAAGGGGDEM) is disordered. Positions 10–22 (AGGGRPAAAGGGG) are enriched in gly residues. HMA domains are found at residues 51–117 (EEAH…FDAE), 133–199 (LSAQ…FEAA), and 207–273 (DKIL…NGRL). 4 residues coordinate Cu cation: Cys62, Cys65, Cys144, and Cys147. The next 8 helical transmembrane spans lie at 302–322 (SLFL…IPFI), 331–351 (GPFH…QFVV), 372–392 (VLVV…LLYG), 396–416 (GFHP…VLFG), 562–582 (IFVP…FLCG), 599–619 (FVFS…CALG), 938–958 (FFAM…LFPF), and 966–986 (WLAG…SLLL).

Belongs to the cation transport ATPase (P-type) (TC 3.A.3) family. Type IB subfamily. Expressed in root vascular cylinder, vascular bundles and mesophyll cells of leaf blades, and anther walls and microspores of stamens.

Its subcellular location is the cell membrane. Its function is as follows. Metal efflux transporter that may play a role in detoxification of heavy metals, such as zinc, copper, lead and cadmium, especially in the shoots. This is Cation-transporting ATPase HMA5 from Oryza sativa subsp. japonica (Rice).